Consider the following 259-residue polypeptide: Ribonuclease HII (259 aa).

In terms of domain architecture, RNase H type-2 spans 70 to 258; the sequence is TLIAGIDEVG…VKSLVLGKKE (189 aa). Residues Asp76, Glu77, and Asp168 each coordinate a divalent metal cation.

The protein belongs to the RNase HII family. It depends on Mn(2+) as a cofactor. Requires Mg(2+) as cofactor.

Its subcellular location is the cytoplasm. The catalysed reaction is Endonucleolytic cleavage to 5'-phosphomonoester.. Endonuclease that specifically degrades the RNA of RNA-DNA hybrids. In Streptococcus pneumoniae (strain P1031), this protein is Ribonuclease HII.